Reading from the N-terminus, the 445-residue chain is Xylose isomerase (445 aa).

Residues His107 and Asp110 contribute to the active site. Mg(2+) contacts are provided by Glu238, Glu274, His277, Asp302, Asp313, Asp315, and Asp345.

Belongs to the xylose isomerase family. In terms of assembly, homotetramer. Requires Mg(2+) as cofactor.

It localises to the cytoplasm. It carries out the reaction alpha-D-xylose = alpha-D-xylulofuranose. This is Xylose isomerase (xylA) from Bacillus subtilis (strain 168).